The sequence spans 106 residues: ATP-dependent Clp protease adapter protein ClpS (106 aa).

The protein belongs to the ClpS family. In terms of assembly, binds to the N-terminal domain of the chaperone ClpA.

Functionally, involved in the modulation of the specificity of the ClpAP-mediated ATP-dependent protein degradation. The polypeptide is ATP-dependent Clp protease adapter protein ClpS (Yersinia enterocolitica serotype O:8 / biotype 1B (strain NCTC 13174 / 8081)).